Consider the following 391-residue polypeptide: Alpha-2B adrenergic receptor (391 aa).

A helical membrane pass occupies residues 1 to 25; sequence AIAAVITFLILFTIFGNALVILAVL. The Cytoplasmic segment spans residues 26-36; that stretch reads TSRSLRAPQNL. A helical membrane pass occupies residues 37–62; sequence FLVSLAAADILVATLIIPFSLANELL. The Extracellular portion of the chain corresponds to 63–72; that stretch reads GYWYFRRTWC. A disulfide bridge links Cys-72 with Cys-151. A helical transmembrane segment spans residues 73–95; that stretch reads EVYLALDVLFCTSSIVHLCAISL. The Cytoplasmic segment spans residues 96–117; it reads DRYWAVSRALEYNSKRTPRRIK. Residues 118–140 traverse the membrane as a helical segment; it reads CIILTVWLIAAVISLPPLIYKGD. The Extracellular portion of the chain corresponds to 141–156; that stretch reads QGPQPRGRPQCKLNQE. A helical transmembrane segment spans residues 157 to 180; it reads AWYILASSIGSFFAPCLIMILVYL. The Cytoplasmic portion of the chain corresponds to 181–355; the sequence is RIYLIAKRSH…LTREKRFTFV (175 aa). Disordered regions lie at residues 194-218 and 233-312; these read PRAK…APSS and EANR…PLQQ. Residues 233–247 are compositionally biased toward basic and acidic residues; that stretch reads EANRHSKSTGEKVEG. The segment covering 256–266 has biased composition (pro residues); sequence PGVPPSWPPLP. Residues 271 to 281 are compositionally biased toward basic and acidic residues; sequence GQEEDIYRASP. Over residues 282–294 the composition is skewed to acidic residues; sequence EEEAGDDEEEECE. The segment covering 295 to 309 has biased composition (low complexity); the sequence is PQAVPVSPASACSPP. A helical transmembrane segment spans residues 356-379; sequence LAVVIGVFVLCWFPFFFSYSLGAI. Residues 380–388 are Extracellular-facing; the sequence is CPQHCKVPH. Residues 389–391 form a helical membrane-spanning segment; it reads GLF.

This sequence belongs to the G-protein coupled receptor 1 family. Adrenergic receptor subfamily. ADRA2B sub-subfamily. In terms of assembly, interacts with RAB26. Interacts with PPP1R9B. Interacts with GGA1, GGA2 and GGA3.

Its subcellular location is the cell membrane. Functionally, alpha-2 adrenergic receptors mediate the catecholamine-induced inhibition of adenylate cyclase through the action of G proteins. The protein is Alpha-2B adrenergic receptor (ADRA2B) of Erinaceus europaeus (Western European hedgehog).